A 304-amino-acid polypeptide reads, in one-letter code: Non-specific ribonucleoside hydrolase RihC (304 aa).

The active site involves His233.

It belongs to the IUNH family. RihC subfamily.

In terms of biological role, hydrolyzes both purine and pyrimidine ribonucleosides with a broad-substrate specificity. This Escherichia fergusonii (strain ATCC 35469 / DSM 13698 / CCUG 18766 / IAM 14443 / JCM 21226 / LMG 7866 / NBRC 102419 / NCTC 12128 / CDC 0568-73) protein is Non-specific ribonucleoside hydrolase RihC.